We begin with the raw amino-acid sequence, 1128 residues long: MSKTLRKKRHWLSKVQECVVSWGGPAGPDPELLHGGAERGEFPYLAGRLPTGAEGAPGPALLSGKAPAPGDVLLEVNGTPVSGLTHRDTLAVIRHFREPVRLKTVRPGKVINKDLRHYLSLQFQKGSIDHKLQQVIRDNLYLRTIPCTTRAPRDGEVPGVDYNFIPVEQFKALEESGALLESGTYDGNFYGTPKPPAEPSPFQPDPVDQVLFDNDFDTESQRKRTTSVSKMQRMDSSLPEDEEEEEKEAVNGSGGIENKEKHSDSSDWMKPVPSYNQTSSSMDFRNYMSRDETLEPLPKNWEMAYTDTGMIYFIDHNTKTTTWLDPRLCKKAKAPEDCEDGELPYGWEKIEDPQYGTYYVDHINQKTQFENPVLEAKRKKQLGQTDGGPSKSVPEKSLFTRDPSQLIGALIRTSLKKSTMGFGFTIIGGDRPDEFLQVKNVLKDGPAAQDGRIAPGDVIVDINGNCVLGHTHADVVQMFQLVPVNQYVNMTLCRGYPLPDDNEDPVVDIVTATPIINGPPVTKGDICLTSQELIAGTVVLDQNGKTGPMLVNGRLNGPSMDTNEQRISVASSGGSQPELVTIPLVKGPKGFGFAIADSPTGQKVKMILDSQWCQGLQKGDVIKEICHQNVQSLTHLQVVEVLKQFPIGAEVPLLILRGGPPSPTKTGKMKDKQESSGSLEALSDAIPQPMPFPPTAVRSGSPKLDPSEVYLKSKTMYEDKPPNTRDLDVFLRKQESGFGFRVLGGDGADQPIYIGAIIPLGAAEKDGRLRAADELMCIDGVPVKGKSHKQVLDLMTSAARNGQVLLTVRRKIFFGGEKQAEEDESQAVVTQNSSPRLNRAEFATQQSPEVYDVCLQRKENEGFGFVILTSKNKPPPGVIPHKIGRVIDGSPADQCGKLKVGDRISAVNGQSIVELSHDSIVQLIKDAGHVVTLTVVAEEEHRGPPSGTNSAKQSPAPQHRPLGPAQSSASSTDRGATEGEAGKEVSNSYRLSWPEHKHLAQPDAGSASGVGSRHSQAQNSGCFPVELERGPRGFGFSLRGGKEYNMGLFILRLAEDGPAVKDGRVHVGDQIVEINGEPTQGITHTRAIELIQAGGNKVLLLLRPGTGLIPDHSLAPSSLCPYVKPEQH.

In terms of domain architecture, PDZ 1 spans 22–108; it reads WGGPAGPDPE…PVRLKTVRPG (87 aa). The 175-residue stretch at 116–290 folds into the Guanylate kinase-like domain; that stretch reads RHYLSLQFQK…SMDFRNYMSR (175 aa). Residue 123–130 coordinates ATP; sequence FQKGSIDH. The interval 184–276 is disordered; it reads TYDGNFYGTP…DWMKPVPSYN (93 aa). The segment covering 193-204 has biased composition (pro residues); sequence PKPPAEPSPFQP. Acidic residues predominate over residues 238-247; that stretch reads LPEDEEEEEK. Over residues 257-267 the composition is skewed to basic and acidic residues; that stretch reads ENKEKHSDSSD. WW domains are found at residues 295–328 and 341–374; these read EPLPKNWEMAYTDTGMIYFIDHNTKTTTWLDPRL and GELPYGWEKIEDPQYGTYYVDHINQKTQFENPVL. PDZ domains follow at residues 412-494 and 581-657; these read RTSL…TLCR and TIPL…LILR. The interval 658-688 is disordered; the sequence is GGPPSPTKTGKMKDKQESSGSLEALSDAIPQ. PDZ domains lie at 728–810 and 852–939; these read DVFL…TVRR and DVCL…VAEE. Disordered stretches follow at residues 939 to 985 and 999 to 1018; these read EEHR…GKEV and LAQPDAGSASGVGSRHSQAQ. Composition is skewed to polar residues over residues 946–956 and 965–974; these read SGTNSAKQSPA and AQSSASSTDR. The region spanning 1024 to 1106 is the PDZ 6 domain; the sequence is PVELERGPRG…KVLLLLRPGT (83 aa).

It belongs to the MAGUK family.

The protein localises to the cell membrane. Its subcellular location is the cell junction. It localises to the tight junction. Its function is as follows. Acts as a scaffolding protein at cell-cell junctions, thereby regulating various cellular and signaling processes. This is Membrane-associated guanylate kinase, WW and PDZ domain-containing protein 3 (MAGI3) from Gallus gallus (Chicken).